The chain runs to 195 residues: Lipid A acyltransferase PagP (195 aa).

Positions M1–A30 are cleaved as a signal peptide. Active-site residues include H67, D110, and S111.

This sequence belongs to the lipid A palmitoyltransferase family. In terms of assembly, homodimer.

The protein resides in the cell outer membrane. It carries out the reaction a lipid A + a 1,2-diacyl-sn-glycero-3-phosphocholine = a hepta-acyl lipid A + a 2-acyl-sn-glycero-3-phosphocholine. It catalyses the reaction a lipid IVA + a 1,2-diacyl-sn-glycero-3-phosphocholine = a lipid IVB + a 2-acyl-sn-glycero-3-phosphocholine. The enzyme catalyses a lipid IIA + a 1,2-diacyl-sn-glycero-3-phosphocholine = a lipid IIB + a 2-acyl-sn-glycero-3-phosphocholine. Functionally, transfers a fatty acid residue from the sn-1 position of a phospholipid to the N-linked hydroxyfatty acid chain on the proximal unit of lipid A or its precursors. The protein is Lipid A acyltransferase PagP of Dickeya chrysanthemi (strain Ech1591) (Dickeya zeae (strain Ech1591)).